A 736-amino-acid polypeptide reads, in one-letter code: Peroxisomal multifunctional enzyme type 2 (736 aa).

Positions 1–305 (MGSPLRFDGR…IEVLSKIDSE (305 aa)) are (3R)-hydroxyacyl-CoA dehydrogenase. NAD(+) is bound by residues 13 to 37 (LVTGAGAGLGRAYALAFAERGALVV), leucine 21, and aspartate 40. At lysine 46 the chain carries N6-acetyllysine; alternate. Lysine 46 carries the post-translational modification N6-succinyllysine; alternate. Serine 52 is modified (phosphoserine). Lysine 57 and lysine 68 each carry N6-succinyllysine. Position 75 to 76 (75 to 76 (SV)) interacts with NAD(+). An N6-succinyllysine modification is found at lysine 84. An NAD(+)-binding site is contributed by asparagine 99. Serine 151 contacts substrate. Catalysis depends on tyrosine 164, which acts as the Proton acceptor. Residues 164-168 (YSAAK) and 196-199 (AGSR) contribute to the NAD(+) site. Threonine 265 bears the Phosphothreonine mark. Lysine 275 is subject to N6-succinyllysine. Phosphoserine is present on residues serine 304 and serine 309. The interval 322–622 (SGFAGAIGQK…AKTPSEGGKL (301 aa)) is enoyl-CoA hydratase 2. Position 356 is an N6-succinyllysine (lysine 356). 406–407 (HG) is a (3R)-3-hydroxydecanoyl-CoA binding site. Residue lysine 424 is modified to N6-succinyllysine. (3R)-3-hydroxydecanoyl-CoA contacts are provided by residues lysine 435, 510–515 (DWNPLH), glycine 533, and phenylalanine 563. The 117-residue stretch at 484 to 600 (IPNRPPDAVL…QETGDIVISN (117 aa)) folds into the MaoC-like domain. Lysine 565 is modified (N6-acetyllysine). An N6-succinyllysine mark is found at lysine 579 and lysine 663. The SCP2 domain maps to 624–736 (STFVFEEIGR…QMILKDYAKL (113 aa)). Lysine 669 is modified (N6-acetyllysine). Glutamine 706 contributes to the substrate binding site. N6-acetyllysine is present on lysine 707. Glutamine 724 is a binding site for substrate. Position 725 is an N6-succinyllysine (lysine 725). A Microbody targeting signal motif is present at residues 734–736 (AKL).

This sequence belongs to the short-chain dehydrogenases/reductases (SDR) family. Homodimer. Present in many tissues with highest concentrations in liver, heart, prostate and testis.

It is found in the peroxisome. The enzyme catalyses a (3R)-3-hydroxyacyl-CoA + NAD(+) = a 3-oxoacyl-CoA + NADH + H(+). The catalysed reaction is a (3R)-3-hydroxyacyl-CoA = a (2E)-enoyl-CoA + H2O. It catalyses the reaction (24R,25R)-3alpha,7alpha,12alpha,24-tetrahydroxy-5beta-cholestan-26-oyl-CoA = (24E)-3alpha,7alpha,12alpha-trihydroxy-5beta-cholest-24-en-26-oyl-CoA + H2O. It carries out the reaction (2E)-octenoyl-CoA + H2O = (3R)-hydroxyoctanoyl-CoA. The enzyme catalyses (3R)-hydroxyoctanoyl-CoA + NAD(+) = 3-oxooctanoyl-CoA + NADH + H(+). The catalysed reaction is (3R)-hydroxyhexadecanoyl-CoA + NAD(+) = 3-oxohexadecanoyl-CoA + NADH + H(+). It catalyses the reaction (2E)-hexadecenedioyl-CoA + H2O = (3R)-hydroxyhexadecanedioyl-CoA. It carries out the reaction (3R)-hydroxyhexadecanedioyl-CoA + NAD(+) = 3-oxohexadecanedioyl-CoA + NADH + H(+). The enzyme catalyses (3R)-hydroxyhexadecanoyl-CoA = (2E)-hexadecenoyl-CoA + H2O. The catalysed reaction is (3R)-3-hydroxydecanoyl-CoA = (2E)-decenoyl-CoA + H2O. It catalyses the reaction (3R)-3-hydroxydecanoyl-CoA + NAD(+) = 3-oxodecanoyl-CoA + NADH + H(+). It carries out the reaction (24R,25R)-3alpha,7alpha,12alpha,24-tetrahydroxy-5beta-cholestan-26-oyl-CoA + NAD(+) = 3alpha,7alpha,12alpha-trihydroxy-24-oxo-5beta-cholestan-26-oyl-CoA + NADH + H(+). It participates in lipid metabolism; fatty acid beta-oxidation. In terms of biological role, bifunctional enzyme acting on the peroxisomal fatty acid beta-oxidation pathway. Catalyzes two of the four reactions in fatty acid degradation: hydration of 2-enoyl-CoA (trans-2-enoyl-CoA) to produce (3R)-3-hydroxyacyl-CoA, and dehydrogenation of (3R)-3-hydroxyacyl-CoA to produce 3-ketoacyl-CoA (3-oxoacyl-CoA), which is further metabolized by SCPx. Can use straight-chain and branched-chain fatty acids, as well as bile acid intermediates as substrates. This is Peroxisomal multifunctional enzyme type 2 from Homo sapiens (Human).